Consider the following 551-residue polypeptide: BAG family molecular chaperone regulator 8, chloroplastic (551 aa).

A compositionally biased stretch (basic residues) spans Met-1–His-19. A disordered region spans residues Met-1–Asp-46. The transit peptide at Met-1–Val-52 directs the protein to the chloroplast. A compositionally biased stretch (polar residues) spans His-20–His-38. Residues Arg-131–Ala-160 form the IQ domain. Residues Val-147–Val-228 enclose the BAG domain. The interval Gly-246–Lys-281 is disordered. A compositionally biased stretch (acidic residues) spans Ser-256–Glu-271. At Ser-332 the chain carries Phosphoserine. 2 disordered regions span residues Asp-414 to Gly-433 and Asn-450 to Pro-551. Residues Gly-479 to Glu-499 show a composition bias toward basic and acidic residues. The span at Ser-500 to Asn-513 shows a compositional bias: acidic residues. Residues Glu-522–His-534 are compositionally biased toward basic and acidic residues.

Binds to the ATPase domain of HSP70/HSC70 chaperones.

It localises to the plastid. The protein resides in the chloroplast. In terms of biological role, co-chaperone that regulates diverse cellular pathways, such as programmed cell death and stress responses. This Arabidopsis thaliana (Mouse-ear cress) protein is BAG family molecular chaperone regulator 8, chloroplastic (BAG1).